The chain runs to 63 residues: uncharacterized protein (63 aa).

This is an uncharacterized protein from Bdellovibrio bacteriovorus (Bacteriophage phiMH2K).